A 235-amino-acid chain; its full sequence is Transmembrane emp24 domain-containing protein 9 (235 aa).

Positions 1 to 37 (MAAVRGVRVVGTSPGLLLGRGMRAFLLLLCLAARGGA) are cleaved as a signal peptide. At 38 to 202 (LYFHIGETEK…RQTSESTNQR (165 aa)) the chain is on the lumenal side. A GOLD domain is found at 47–145 (KKCFIEEIPD…MLRVHLDIQV (99 aa)). Residues 121–160 (CLHSNSTKFSLFAGGMLRVHLDIQVGEHANDYAEIAAKDK) are required for interaction with STX17. Asn125 carries an N-linked (GlcNAc...) asparagine glycan. A coiled-coil region spans residues 154 to 184 (EIAAKDKLSELQLRVRQLVEQVEQIQKEQNY). At Lys160 the chain carries N6-acetyllysine. Residues 203–222 (VLWWSILQTLILVAIGVWQM) traverse the membrane as a helical segment. Residues 223 to 235 (RHLKSFFEAKKLV) are Cytoplasmic-facing. The short motif at 228–229 (FF) is the COPII vesicle coat-binding element. Positions 228-235 (FFEAKKLV) match the COPI vesicle coat-binding motif.

This sequence belongs to the EMP24/GP25L family. Monomer and homodimer in endoplasmic reticulum. Predominantly monomeric and to lesser extent homodimeric in endoplasmic reticulum-Golgi intermediate compartment and cis-Golgi network. Probably oligomerizes with other members of the EMP24/GP25L family such as TMED2, TMED7 and TMED10. Interacts with TMED5. Interacts (via C-terminus) with COPG1; the interaction involves dimeric TMED9. Interacts with PTPN2 and SPAST. Interacts with STX17; the interaction is direct. In terms of processing, N-linked glycosylated containing high mannose.

The protein localises to the endoplasmic reticulum membrane. It is found in the golgi apparatus. The protein resides in the cis-Golgi network membrane. It localises to the endoplasmic reticulum-Golgi intermediate compartment membrane. Its subcellular location is the trans-Golgi network membrane. In terms of biological role, appears to be involved in vesicular protein trafficking, mainly in the early secretory pathway. In COPI vesicle-mediated retrograde transport involved in the coatomer recruitment to membranes of the early secretory pathway. Increases coatomer-dependent activity of ARFGAP2. Thought to play a crucial role in the specific retention of p24 complexes in cis-Golgi membranes; specifically contributes to the coupled localization of TMED2 and TMED10 in the cis-Golgi network. May be involved in organization of intracellular membranes, such as of the ER-Golgi intermediate compartment and the Golgi apparatus. Involved in ER localization of PTPN2. The polypeptide is Transmembrane emp24 domain-containing protein 9 (Tmed9) (Rattus norvegicus (Rat)).